Here is a 124-residue protein sequence, read N- to C-terminus: Small ribosomal subunit protein eS25 (124 aa).

A compositionally biased stretch (basic and acidic residues) spans Pro1–Val22. The interval Pro1–Gly37 is disordered. Positions Gly27–Gly37 are enriched in basic residues. Position 42 is an N6-acetyllysine (Lys42). Lys51 bears the N6-acetyllysine; alternate mark. Lys51 bears the N6-succinyllysine; alternate mark. Lys59 and Lys65 each carry N6-acetyllysine. Lys93 is subject to N6-acetyllysine; alternate. Lys93 carries the N6-succinyllysine; alternate modification.

This sequence belongs to the eukaryotic ribosomal protein eS25 family. Component of the small ribosomal subunit.

It is found in the cytoplasm. Functionally, component of the small ribosomal subunit. The ribosome is a large ribonucleoprotein complex responsible for the synthesis of proteins in the cell. The chain is Small ribosomal subunit protein eS25 (RPS25) from Oryctolagus cuniculus (Rabbit).